Reading from the N-terminus, the 351-residue chain is DNA polymerase IV (351 aa).

Positions 4 to 185 (IIHVDMDCFF…LPLAKIPGVG (182 aa)) constitute a UmuC domain. Positions 8 and 103 each coordinate Mg(2+). Glutamate 104 is an active-site residue.

The protein belongs to the DNA polymerase type-Y family. As to quaternary structure, monomer. The cofactor is Mg(2+).

It is found in the cytoplasm. The catalysed reaction is DNA(n) + a 2'-deoxyribonucleoside 5'-triphosphate = DNA(n+1) + diphosphate. In terms of biological role, poorly processive, error-prone DNA polymerase involved in untargeted mutagenesis. Copies undamaged DNA at stalled replication forks, which arise in vivo from mismatched or misaligned primer ends. These misaligned primers can be extended by PolIV. Exhibits no 3'-5' exonuclease (proofreading) activity. May be involved in translesional synthesis, in conjunction with the beta clamp from PolIII. The sequence is that of DNA polymerase IV from Escherichia coli (strain ATCC 8739 / DSM 1576 / NBRC 3972 / NCIMB 8545 / WDCM 00012 / Crooks).